We begin with the raw amino-acid sequence, 106 residues long: Putative protein SH (106 aa).

A disordered region spans residues 48–106 (HSQQNNSGHQFGDRFHSKGHQDTEGRILWKEASTRTTDSTETADTQLVQRQGNGGICLS). The segment covering 58 to 80 (FGDRFHSKGHQDTEGRILWKEAS) has biased composition (basic and acidic residues). Low complexity predominate over residues 81 to 92 (TRTTDSTETADT).

Heart.

Functionally, may be involved with the regulation of GNRH gene expression. It is not known if this protein is transcribed. This Rattus norvegicus (Rat) protein is Putative protein SH.